The primary structure comprises 199 residues: MSSDTRPALILGSSSPYRRELLSRLRIPFEVATPDIDETPLAGERPAATALRLSRLKAEAIAALHAGALVIGSDQVCTLDDQQIGKPGTHAKALAQLQLMRGRTVTFHSALCLLDGRTGEAQIADIQTHATFRNLSDAELDAYLRLETPYDCAGSAKVEGLGIMLLERVESDDPTALIGLPLIALTGMLRHAGYPCFGA.

Residue D74 is the Proton acceptor of the active site.

Belongs to the Maf family. YceF subfamily. It depends on a divalent metal cation as a cofactor.

It is found in the cytoplasm. It catalyses the reaction N(7)-methyl-GTP + H2O = N(7)-methyl-GMP + diphosphate + H(+). In terms of biological role, nucleoside triphosphate pyrophosphatase that hydrolyzes 7-methyl-GTP (m(7)GTP). May have a dual role in cell division arrest and in preventing the incorporation of modified nucleotides into cellular nucleic acids. The polypeptide is 7-methyl-GTP pyrophosphatase (Cupriavidus metallidurans (strain ATCC 43123 / DSM 2839 / NBRC 102507 / CH34) (Ralstonia metallidurans)).